Consider the following 359-residue polypeptide: MTRPIRATLDLAAIRHNYQQAKACSPESFAFAVIKADAYGHGYEQVAAALAVWPTVLPSSTSSRARTLREAGLRQPILLLEGCFDRAELEEAARLQLTVPFHAAHQFDWLKQGSLPAPLEVMLKLNTGMNRLGFRPDEAPRAAAWLQARNDIRLAGLMTHFATADGDPGIAAQLSRFDEVNASLGLPSCVANSAALMRHPASRRQYVRPGIMLYGASPFADQSAAELGLRPAMRLEADIIGVQSLQAGDAVGYGATFVADRPMRIGVVACGYADGYPRVAPAGTPCAIGGQPARLVGRVSMDMLTIDLTSLPQAGVGDRVTLWGGDGVSIDDVATAAGTIGYELMCALAPRVPRRVVGA.

The Proton acceptor; specific for D-alanine role is filled by Lys-35. Lys-35 is subject to N6-(pyridoxal phosphate)lysine. Arg-131 contacts substrate. Residue Tyr-253 is the Proton acceptor; specific for L-alanine of the active site. Residue Met-301 coordinates substrate.

The protein belongs to the alanine racemase family. The cofactor is pyridoxal 5'-phosphate.

It carries out the reaction L-alanine = D-alanine. Its pathway is amino-acid biosynthesis; D-alanine biosynthesis; D-alanine from L-alanine: step 1/1. Catalyzes the interconversion of L-alanine and D-alanine. May also act on other amino acids. This chain is Alanine racemase (alr), found in Laribacter hongkongensis (strain HLHK9).